We begin with the raw amino-acid sequence, 326 residues long: Putative ankyrin repeat protein L25 (326 aa).

ANK repeat units lie at residues 11–40 (RSEY…DLNV), 42–65 (KLFY…NIHV), 66–95 (DDEF…DIHV), 96–125 (NDDA…DIHA), 127–154 (NELV…DIHA), 155–184 (EDDE…NFRA), 185–214 (ENDY…DIHA), 216–244 (DEYA…DIHA), 246–274 (NDYG…NIHA), and 275–304 (KDDY…NIHA).

This is Putative ankyrin repeat protein L25 from Acanthamoeba polyphaga mimivirus (APMV).